The primary structure comprises 78 residues: Large ribosomal subunit protein bL28 (78 aa).

Residues 1 to 21 (MSRVCQVTGKKPMVGNNRSHA) form a disordered region.

This sequence belongs to the bacterial ribosomal protein bL28 family.

The protein is Large ribosomal subunit protein bL28 of Shewanella loihica (strain ATCC BAA-1088 / PV-4).